A 54-amino-acid polypeptide reads, in one-letter code: Large ribosomal subunit protein bL33 (54 aa).

The protein belongs to the bacterial ribosomal protein bL33 family.

The protein is Large ribosomal subunit protein bL33 of Thermus thermophilus (strain ATCC BAA-163 / DSM 7039 / HB27).